The sequence spans 689 residues: Glycine--tRNA ligase beta subunit (689 aa).

It belongs to the class-II aminoacyl-tRNA synthetase family. In terms of assembly, tetramer of two alpha and two beta subunits.

The protein resides in the cytoplasm. It carries out the reaction tRNA(Gly) + glycine + ATP = glycyl-tRNA(Gly) + AMP + diphosphate. The polypeptide is Glycine--tRNA ligase beta subunit (Klebsiella pneumoniae subsp. pneumoniae (strain ATCC 700721 / MGH 78578)).